Reading from the N-terminus, the 98-residue chain is Small ribosomal subunit protein bS20 (98 aa).

Belongs to the bacterial ribosomal protein bS20 family.

Its function is as follows. Binds directly to 16S ribosomal RNA. This is Small ribosomal subunit protein bS20 from Parasynechococcus marenigrum (strain WH8102).